The primary structure comprises 597 residues: Arginine--tRNA ligase (597 aa).

The 'HIGH' region motif lies at 138-148; the sequence is ANPTGPMHVGH.

Belongs to the class-I aminoacyl-tRNA synthetase family. In terms of assembly, monomer.

It is found in the cytoplasm. The catalysed reaction is tRNA(Arg) + L-arginine + ATP = L-arginyl-tRNA(Arg) + AMP + diphosphate. The sequence is that of Arginine--tRNA ligase from Rhodopseudomonas palustris (strain HaA2).